Consider the following 57-residue polypeptide: Alpha-conotoxin-like Sm1.2 (57 aa).

The signal sequence occupies residues 1–16; that stretch reads MFTVFLLVVLATTVVS. Positions 17–42 are excised as a propeptide; that stretch reads FPSDRESDGANDEARTDEPEEHGPDR. The disordered stretch occupies residues 17 to 46; that stretch reads FPSDRESDGANDEARTDEPEEHGPDRNGCC. The span at 19–41 shows a compositional bias: basic and acidic residues; the sequence is SDRESDGANDEARTDEPEEHGPD. 2 cysteine pairs are disulfide-bonded: cysteine 45–cysteine 51 and cysteine 46–cysteine 56. Cysteine 56 carries the post-translational modification Cysteine amide.

It belongs to the conotoxin A superfamily. Expressed by the venom duct.

Its subcellular location is the secreted. In terms of biological role, alpha-conotoxins act on postsynaptic membranes, they bind to the nicotinic acetylcholine receptors (nAChR) and thus inhibit them. This chain is Alpha-conotoxin-like Sm1.2, found in Conus stercusmuscarum (Fly-specked cone).